The following is a 109-amino-acid chain: Tetraspanin-31 (109 aa).

Topologically, residues methionine 1–alanine 12 are cytoplasmic. Residues leucine 13 to tryptophan 33 form a helical membrane-spanning segment. Residues alanine 34–histidine 44 lie on the Extracellular side of the membrane. A helical transmembrane segment spans residues isoleucine 45–valine 65. Residues glycine 66–glutamine 72 are Cytoplasmic-facing. Residues valine 73–serine 93 traverse the membrane as a helical segment. At cysteine 94 to asparagine 109 the chain is on the extracellular side. N-linked (GlcNAc...) asparagine glycosylation occurs at asparagine 100.

This sequence belongs to the tetraspanin (TM4SF) family.

The protein resides in the membrane. The chain is Tetraspanin-31 (TSPAN31) from Sus scrofa (Pig).